A 218-amino-acid chain; its full sequence is MFNFWGSKEQQQGQSRPSPEASATPWYSPSLVTSPSSSRPQTSGQIPSHVSPGEAAGIIAILKDKSVDELRKLLSDKDAYQQFLHSLDQVTIQNNIREELRKETLHLARENLEKEPQIVELRNQCRIIRTSELATAQEKLNELENQREEILKFYSPGSLLHRLQDAMNQVDEESEELQQKFMEKDIDTAAFVQKYKKLRSKYHRRALIHLAAKTSSIG.

The disordered stretch occupies residues 1–51; that stretch reads MFNFWGSKEQQQGQSRPSPEASATPWYSPSLVTSPSSSRPQTSGQIPSHVS. Positions 8 to 17 are enriched in polar residues; that stretch reads KEQQQGQSRP. Over residues 28–40 the composition is skewed to low complexity; the sequence is SPSLVTSPSSSRP. Residues 137–218 enclose the VPS37 C-terminal domain; sequence QEKLNELENQ…HLAAKTSSIG (82 aa).

This sequence belongs to the VPS37 family. Component of the endosomal sorting required for transport complex I (ESCRT-I), composed of ELC, VPS28 and VPS37. Interacts with ELC.

Its subcellular location is the endosome. Functionally, component of the ESCRT-I complex (endosomal sorting complex required for transport I), a regulator of vesicular trafficking process. Required for the sorting of endocytic ubiquitinated cargos into multivesicular bodies (MVBs). The sequence is that of Vacuolar protein-sorting-associated protein 37 homolog 2 (VPS37-2) from Arabidopsis thaliana (Mouse-ear cress).